Here is a 430-residue protein sequence, read N- to C-terminus: Serine--tRNA ligase (430 aa).

The tract at residues 47–66 is disordered; sequence AQAEQNKASKEAGAAKGRGD. 231–233 provides a ligand contact to L-serine; sequence TSE. 262–264 is an ATP binding site; that stretch reads RSE. Glu-285 contacts L-serine. 349-352 lines the ATP pocket; it reads EISS. Ser-385 provides a ligand contact to L-serine.

The protein belongs to the class-II aminoacyl-tRNA synthetase family. Type-1 seryl-tRNA synthetase subfamily. As to quaternary structure, homodimer. The tRNA molecule binds across the dimer.

The protein localises to the cytoplasm. It carries out the reaction tRNA(Ser) + L-serine + ATP = L-seryl-tRNA(Ser) + AMP + diphosphate + H(+). The catalysed reaction is tRNA(Sec) + L-serine + ATP = L-seryl-tRNA(Sec) + AMP + diphosphate + H(+). It functions in the pathway aminoacyl-tRNA biosynthesis; selenocysteinyl-tRNA(Sec) biosynthesis; L-seryl-tRNA(Sec) from L-serine and tRNA(Sec): step 1/1. Functionally, catalyzes the attachment of serine to tRNA(Ser). Is also able to aminoacylate tRNA(Sec) with serine, to form the misacylated tRNA L-seryl-tRNA(Sec), which will be further converted into selenocysteinyl-tRNA(Sec). This chain is Serine--tRNA ligase, found in Paracoccus denitrificans (strain Pd 1222).